We begin with the raw amino-acid sequence, 120 residues long: Large ribosomal subunit protein uL18 (120 aa).

It belongs to the universal ribosomal protein uL18 family. As to quaternary structure, part of the 50S ribosomal subunit; part of the 5S rRNA/L5/L18/L25 subcomplex. Contacts the 5S and 23S rRNAs.

Functionally, this is one of the proteins that bind and probably mediate the attachment of the 5S RNA into the large ribosomal subunit, where it forms part of the central protuberance. The polypeptide is Large ribosomal subunit protein uL18 (Rhodopseudomonas palustris (strain HaA2)).